The primary structure comprises 72 residues: Toxin Acra II-2 (72 aa).

The region spanning 3–67 (VPGNYPLNTN…VWNAAKNYCK (65 aa)) is the LCN-type CS-alpha/beta domain. Intrachain disulfides connect Cys18–Cys41, Cys27–Cys46, and Cys31–Cys48.

Belongs to the long (3 C-C) scorpion toxin superfamily. Sodium channel inhibitor family. Beta subfamily. In terms of tissue distribution, expressed by the venom gland.

The protein localises to the secreted. Its function is as follows. Binds to sodium channels (Nav) and affects the channel activation process. The sequence is that of Toxin Acra II-2 from Androctonus crassicauda (Arabian fat-tailed scorpion).